Reading from the N-terminus, the 193-residue chain is Chromophore lyase CpcS/CpeS 4 (193 aa).

This sequence belongs to the CpcS/CpeS biliprotein lyase family.

In terms of biological role, covalently attaches a chromophore to Cys residue(s) of phycobiliproteins. In Trichodesmium erythraeum (strain IMS101), this protein is Chromophore lyase CpcS/CpeS 4.